A 916-amino-acid polypeptide reads, in one-letter code: Protein prickle (916 aa).

2 disordered regions span residues 49-105 and 127-176; these read PLSP…AGGS and QHLQ…IPVD. Positions 145–156 are enriched in low complexity; it reads SSPSPALSSSIT. A compositionally biased stretch (gly residues) spans 157–171; it reads TGGGGVTRGGGGGGH. The PET domain maps to 167–275; it reads GGGGHIIPVD…TVKQLATNQI (109 aa). LIM zinc-binding domains follow at residues 274–338, 339–399, and 400–462; these read QICD…ETLK, PRCS…MFAE, and YCDF…GEPP. Disordered regions lie at residues 460-593, 635-671, 692-725, and 763-870; these read EPPT…PNHR, VIPGPSIAKTNPALTSSMPELSQSLQQQQQQQQQPQS, DAIQNASDDASHSIVELPTPPPIVSNTRDPENLP, and RSKS…DTVY. Composition is skewed to polar residues over residues 507-517, 526-569, and 642-654; these read SPISERSTPHS, EMST…SRTL, and AKTNPALTSSMPE. Positions 655–671 are enriched in low complexity; it reads LSQSLQQQQQQQQQPQS. Over residues 777 to 793 the composition is skewed to basic residues; it reads RSSKSKRRSSHHHQHHR. Residues 796-805 show a composition bias toward low complexity; sequence GESSSYSGTS. Over residues 829-844 the composition is skewed to basic and acidic residues; the sequence is VPDVEFIEHQDHHRGD. Positions 852–867 are enriched in low complexity; the sequence is RSVCSTCSSSSSSADD.

This sequence belongs to the prickle / espinas / testin family. In terms of assembly, interacts with dsh; PET and LIM domains interact with dsh DEP domain, in wing cells. Interacts with Vang in photoreceptor cells.

The protein localises to the cell membrane. Acts in a planar cell polarity (PCP) complex; polarization along the apical/basal axis of epithelial cells. PCP signaling in the wing disk requires the receptor fz and the cytoplasmic proteins dsh and pk. These act in a feedback loop leading to activation of the jnk cascade and subsequent polarized arrangement of hairs and bristles. Dgo and pk compete with one another for dsh binding, thereby modulating fz dsh activity and ensuring tight control over fz PCP signaling. Vang, stan and pk function together to regulate the establishment of tissue polarity in the adult eye. The polypeptide is Protein prickle (Aedes aegypti (Yellowfever mosquito)).